We begin with the raw amino-acid sequence, 405 residues long: MTKIYSSIAVKKGLFTLFLLFIYVLGSRIILPFVDLNTKDFLGGSTAYLAFSAALTGGNLRSLSIFSVGLSPWMSAMILWQMFSYSKKLGLSSTAIEIQDRRRMYLTLMIAVIQSLAVSLRLPVQSSYSAILVVLMNTILLIAGTFFLVWLSDLNASMGIGGSIVILLSSMVLNIPQDVLETFQTVHIPTGIIVLLALLTLVFSYLLALMYRARYLVPVNKIGLHNRFKRYSYLEIMLNPAGGMPYMYVMSFLSVPAYLFILLGFIFPNHSGLAALSKEFMIGKPLWVYVYISVLFLFSIIFAFVTMNGEEIADRMKKSGEYIYGIYPGADTSLFINRLVLRFSVIGGLFNVVMAGGPMLFVLFDEKLLRLAMIPGLFMMFGGMIFTIRDEVKALRLNETYKPLI.

10 helical membrane passes run 14–34 (LFTL…LPFV), 63–83 (LSIF…WQMF), 104–124 (MYLT…RLPV), 131–151 (ILVV…LVWL), 156–176 (ASMG…LNIP), 191–211 (GIIV…ALMY), 247–267 (MYVM…GFIF), 285–305 (PLWV…FAFV), 343–363 (FSVI…LFVL), and 368–388 (LLRL…IFTI).

The protein belongs to the SecY/SEC61-alpha family. SecY2 subfamily. Component of the accessory SecA2/SecY2 protein translocase complex required to export cell wall proteins. May form heterotrimers with SecE and SecG subunits.

The protein localises to the cell membrane. In terms of biological role, part of the accessory SecA2/SecY2 system specifically required for export of possible cell wall proteins. The central subunit of a protein translocation channel. This is Accessory Sec system protein translocase subunit SecY2 from Streptococcus pneumoniae (strain CGSP14).